Consider the following 614-residue polypeptide: BPI fold-containing family B member 4 (614 aa).

The signal sequence occupies residues 1-18 (MWMAWCVAALSVVAVCGT). N-linked (GlcNAc...) asparagine glycosylation is present at asparagine 273. Residues cysteine 295 and cysteine 332 are joined by a disulfide bond.

The protein belongs to the BPI/LBP/Plunc superfamily. BPI/LBP family. Expressed in nasal tissue.

The protein resides in the secreted. It localises to the cytoplasm. In terms of biological role, may have the capacity to recognize and bind specific classes of odorants. May act as a carrier molecule, transporting odorants across the mucus layer to access receptor sites. May serve as a primary defense mechanism by recognizing and removing potentially harmful odorants or pathogenic microorganisms from the mucosa or clearing excess odorant from mucus to enable new odorant stimuli to be received. The protein is BPI fold-containing family B member 4 (BPIFB4) of Homo sapiens (Human).